The sequence spans 172 residues: Interferon tau-3 (172 aa).

Cystine bridges form between Cys1/Cys99 and Cys29/Cys139.

Belongs to the alpha/beta interferon family. IFN-alphaII subfamily. In terms of tissue distribution, constitutively and exclusively expressed in the mononuclear cells of the extraembryonic trophectoderm.

The protein resides in the secreted. Functionally, paracrine hormone primarily responsible for maternal recognition of pregnancy. Interacts with endometrial receptors, probably type I interferon receptors, and blocks estrogen receptor expression, preventing the estrogen-induced increase in oxytocin receptor expression in the endometrium. This results in the suppression of the pulsatile endometrial release of the luteolytic hormone prostaglandin F2-alpha, hindering the regression of the corpus luteum (luteolysis) and therefore a return to ovarian cyclicity. This, and a possible direct effect of IFN-tau on prostaglandin synthesis, leads in turn to continued ovarian progesterone secretion, which stimulates the secretion by the endometrium of the nutrients required for the growth of the conceptus. In summary, displays particularly high antiviral and antiproliferative potency concurrently with particular weak cytotoxicity, high antiluteolytic activity and immunomodulatory properties. In contrast with other IFNs, IFN-tau is not virally inducible. In Ovis aries (Sheep), this protein is Interferon tau-3 (IFNT3).